We begin with the raw amino-acid sequence, 696 residues long: Serine/threonine-protein kinase sck1 (696 aa).

Disordered regions lie at residues 1 to 59 (MTEI…YDPV) and 77 to 118 (HKEQ…TPPS). Positions 11–37 (SSNSENTNQASPSTIQSHSTQPVLSND) are enriched in polar residues. 2 stretches are compositionally biased toward basic and acidic residues: residues 38–49 (HSTKVNDYEGKE) and 77–88 (HKEQSLKEDKES). The C2 domain maps to 122–272 (IRHDTVVPKD…VQEAWYKLEP (151 aa)). One can recognise a Protein kinase domain in the interval 302 to 563 (FTALRLIGKG…TTELKEHPFF (262 aa)). ATP-binding positions include 308–316 (IGKGTFGQV) and lysine 331. Aspartate 428 (proton acceptor) is an active-site residue. Residues 564-643 (ADINWDLLSK…VNKSIDEQFQ (80 aa)) form the AGC-kinase C-terminal domain. Threonine 632 is modified (phosphothreonine). Serine 665 carries the phosphoserine modification.

This sequence belongs to the protein kinase superfamily. AGC Ser/Thr protein kinase family. cAMP subfamily.

It catalyses the reaction L-seryl-[protein] + ATP = O-phospho-L-seryl-[protein] + ADP + H(+). The enzyme catalyses L-threonyl-[protein] + ATP = O-phospho-L-threonyl-[protein] + ADP + H(+). Its function is as follows. Protein kinase that is part of growth control pathway which is at least partially redundant with the cAMP pathway. Required for trehalase activation. The sequence is that of Serine/threonine-protein kinase sck1 (sck1) from Schizosaccharomyces pombe (strain 972 / ATCC 24843) (Fission yeast).